Consider the following 465-residue polypeptide: U4/U6 small nuclear ribonucleoprotein PRP4 (465 aa).

WD repeat units lie at residues 173–212 (VSTK…PLTQ), 216–256 (SHVG…GGLR), 263–302 (GHER…ELLL), 305–344 (GHDK…KVMT), 347–386 (GHSK…EGQL), 391–432 (AHRN…KMGS), and 435–464 (GHTD…IKLW).

As to quaternary structure, component of the U4/U6-U5 tri-snRNP complex composed of the U4, U6 and U5 snRNAs and at least PRP3, PRP4, PRP6, PRP8, PRP18, PRP31, PRP38, SNU13, SNU23, SNU66, SNU114, SPP381, SMB1, SMD1, SMD2, SMD3, SMX2, SMX3, LSM2, LSM3, LSM4, LSM5, LSM6, LSM7, LSM8, BRR2 and DIB1.

It localises to the nucleus. In terms of biological role, involved in RNA splicing. Is required for the association of U4/U6 snRNP with U5 snRNP in an early step of spliceosome assembly. This Saccharomyces cerevisiae (strain ATCC 204508 / S288c) (Baker's yeast) protein is U4/U6 small nuclear ribonucleoprotein PRP4 (PRP4).